The primary structure comprises 434 residues: Vi polysaccharide export inner-membrane protein VexD (434 aa).

Residues 1-50 show a composition bias toward basic and acidic residues; that stretch reads MENSERIKKWKEERAKVAQESRASRLQQKEDERALRQTEKSADAKSHHNP. Positions 1-58 are disordered; that stretch reads MENSERIKKWKEERAKVAQESRASRLQQKEDERALRQTEKSADAKSHHNPDAGWSATD. 2 consecutive transmembrane segments (helical) span residues 84–104 and 409–429; these read LFLY…ILTS and WLLF…LITI.

It belongs to the BexC/CtrB/KpsE family.

Its subcellular location is the cell inner membrane. Its function is as follows. May form an ATP-driven capsule polysaccharide export apparatus, in association with the VexA, VexB and VexC proteins. This is Vi polysaccharide export inner-membrane protein VexD (vexD) from Salmonella typhi.